A 131-amino-acid chain; its full sequence is D-ribose pyranase (131 aa).

Catalysis depends on His-20, which acts as the Proton donor. Residues Asp-28, His-98, and 120–122 (YAN) contribute to the substrate site.

Belongs to the RbsD / FucU family. RbsD subfamily. In terms of assembly, homodecamer.

Its subcellular location is the cytoplasm. The enzyme catalyses beta-D-ribopyranose = beta-D-ribofuranose. The protein operates within carbohydrate metabolism; D-ribose degradation; D-ribose 5-phosphate from beta-D-ribopyranose: step 1/2. Functionally, catalyzes the interconversion of beta-pyran and beta-furan forms of D-ribose. The chain is D-ribose pyranase from Bacillus cytotoxicus (strain DSM 22905 / CIP 110041 / 391-98 / NVH 391-98).